Here is a 363-residue protein sequence, read N- to C-terminus: UDP-N-acetylenolpyruvoylglucosamine reductase (363 aa).

Residues 27–197 (LGGWATRVVT…LSVDFRLARS (171 aa)) enclose the FAD-binding PCMH-type domain. Arginine 175 is an active-site residue. The Proton donor role is filled by serine 252. The active site involves glutamate 355.

The protein belongs to the MurB family. FAD is required as a cofactor.

Its subcellular location is the cytoplasm. It carries out the reaction UDP-N-acetyl-alpha-D-muramate + NADP(+) = UDP-N-acetyl-3-O-(1-carboxyvinyl)-alpha-D-glucosamine + NADPH + H(+). Its pathway is cell wall biogenesis; peptidoglycan biosynthesis. Functionally, cell wall formation. The chain is UDP-N-acetylenolpyruvoylglucosamine reductase from Salinispora arenicola (strain CNS-205).